We begin with the raw amino-acid sequence, 274 residues long: Single-stranded DNA-binding protein WHY1, chloroplastic (274 aa).

The transit peptide at 1-54 directs the protein to the chloroplast; that stretch reads MSNFSLSPSPTSGFSLNLQNPTKTSYLSFSSSINTIFAPLSSNTTKSFSGLTHK. The segment at 100 to 105 is required for ssDNA binding; the sequence is KGKAAL. Residues 178–191 carry the Nuclear localization signal motif; the sequence is KGRSDEGRVRKVLK. A disordered region spans residues 253-274; sequence PEDASRSNNANPRSGAELEWNR.

This sequence belongs to the Whirly family. Homotetramer.

The protein localises to the nucleus. The protein resides in the plastid. Its subcellular location is the chloroplast. Functionally, single-stranded DNA-binding protein that acts as a transcriptional activator of the pathogenesis-related gene PR-10a. Upon elicitation, binds a 30bp promoter sequence known as elicitor element response (ERE) and is required for PR-10a expression. This chain is Single-stranded DNA-binding protein WHY1, chloroplastic (WHY1), found in Solanum tuberosum (Potato).